Consider the following 580-residue polypeptide: Protein O-linked-mannose beta-1,4-N-acetylglucosaminyltransferase 2 (580 aa).

Over 1 to 4 (MHLS) the chain is Cytoplasmic. Residues 5–25 (AVLNALLVSVLAAVLWKHVRL) traverse the membrane as a helical; Signal-anchor for type II membrane protein segment. The Lumenal segment spans residues 26 to 580 (REHAAALEEE…PFADVLVCNT (555 aa)). Residues Asn99 and Asn276 are each glycosylated (N-linked (GlcNAc...) asparagine). Residues 488-580 (ARCQASVQGA…PFADVLVCNT (93 aa)) form the Fibronectin type-III domain.

It belongs to the glycosyltransferase 61 family.

Its subcellular location is the endoplasmic reticulum membrane. The enzyme catalyses 3-O-(alpha-D-mannosyl)-L-threonyl-[protein] + UDP-N-acetyl-alpha-D-glucosamine = 3-O-(N-acetyl-beta-D-glucosaminyl-(1-&gt;4)-alpha-D-mannosyl)-L-threonyl-[protein] + UDP + H(+). It functions in the pathway protein modification; protein glycosylation. Its function is as follows. O-linked mannose beta-1,4-N-acetylglucosaminyltransferase that transfers UDP-N-acetyl-D-glucosamine to the 4-position of the mannose to generate N-acetyl-D-glucosamine-beta-1,4-O-D-mannosylprotein. Involved in the biosynthesis of the phosphorylated O-mannosyl trisaccharide (N-acetylgalactosamine-beta-3-N-acetylglucosamine-beta-4-(phosphate-6-)mannose), a carbohydrate structure present in alpha-dystroglycan (DAG1), which is required for binding laminin G-like domain-containing extracellular proteins with high affinity. The polypeptide is Protein O-linked-mannose beta-1,4-N-acetylglucosaminyltransferase 2 (POMGNT2) (Canis lupus familiaris (Dog)).